A 304-amino-acid polypeptide reads, in one-letter code: Insulin-like growth factor 1 receptor (304 aa).

Fibronectin type-III domains lie at 1 to 43 (ERTV…TMPA) and 49 to 142 (IPGP…VQAK). Topologically, residues 1–147 (ERTVISNLRP…YVQAKTTYEN (147 aa)) are extracellular. 2 N-linked (GlcNAc...) asparagine glycosylation sites follow: asparagine 115 and asparagine 128. Residues 148-168 (FIHLIIALPVAVLLIVGGLVI) traverse the membrane as a helical segment. Topologically, residues 169–304 (MLYVFHRKRN…HMNGGRKNER (136 aa)) are cytoplasmic. The residue at position 225 (serine 225) is a Phosphoserine; by GSK3-beta. The residue at position 229 (serine 229) is a Phosphoserine. Residues 231–304 (ENKPPEPEEL…HMNGGRKNER (74 aa)) form a disordered region. The span at 237–246 (PEELDLEPEN) shows a compositional bias: acidic residues. Positions 247–263 (MESVPLDPSASSSSLPL) are enriched in low complexity. A compositionally biased stretch (basic and acidic residues) spans 264-273 (PDRHSGHKAE).

Belongs to the protein kinase superfamily. Tyr protein kinase family. Insulin receptor subfamily. Tetramer of 2 alpha and 2 beta chains linked by disulfide bonds. The alpha chains contribute to the formation of the ligand-binding domain, while the beta chain carries the kinase domain. Forms a hybrid receptor with INSR, the hybrid is a tetramer consisting of 1 alpha chain and 1 beta chain of INSR and 1 alpha chain and 1 beta chain of IGF1R. Interacts with ARRB1 and ARRB2. Interacts with GRB10. Interacts with RACK1. Interacts with SOCS1, SOCS2 and SOCS3. Interacts with 14-3-3 proteins. Interacts with NMD2. Interacts with MAP3K5. Interacts with STAT3. Found in a ternary complex with IGF1 and ITGAV:ITGB3 or ITGA6:ITGB4. Interacts (nascent precursor form) with ZFAND2B. Autophosphorylated on tyrosine residues in response to ligand binding. Autophosphorylation occurs in trans, i.e. one subunit of the dimeric receptor phosphorylates tyrosine residues on the other subunit. Autophosphorylation occurs in a sequential manner. While every single phosphorylation increases kinase activity, all three tyrosine residues in the kinase activation loop have to be phosphorylated for optimal activity. Can be autophosphorylated at additional tyrosine residues (in vitro). May also be phosphorylated at tyrosine residues by mTORC2. Autophosphorylated is followed by phosphorylation of juxtamembrane tyrosines and C-terminal serines. Phosphorylation of Ser-225 by GSK-3beta restrains kinase activity and promotes cell surface expression, it requires a priming phosphorylation at Ser-229. Dephosphorylated by PTPN1. In terms of processing, polyubiquitinated in the activation loop through both 'Lys-48' and 'Lys-29' linkages, promoting receptor endocytosis and subsequent degradation by the proteasome. Ubiquitination is facilitated by pre-existing phosphorylation. Post-translationally, sumoylated with SUMO1. Controlled by regulated intramembrane proteolysis (RIP). Undergoes metalloprotease-dependent constitutive ectodomain shedding to produce a membrane-anchored 52 kDa C-Terminal fragment which is further processed by presenilin gamma-secretase to yield an intracellular 50 kDa fragment.

It localises to the cell membrane. The enzyme catalyses L-tyrosyl-[protein] + ATP = O-phospho-L-tyrosyl-[protein] + ADP + H(+). Its activity is regulated as follows. Activated by autophosphorylation at tyrosines in the kinase activation loop; phosphorylation at all three tyrosine residues is required for optimal kinase activity. Inhibited by MSC1609119A-1, BMS-754807, PQIP, benzimidazole pyridinone, isoquinolinedione, bis-azaindole, 3-cyanoquinoline, 2,4-bis-arylamino-1,3-pyrimidine, pyrrolopyrimidine, pyrrole-5-carboxaldehyde, picropodophyllin (PPP), tyrphostin derivatives. While most inhibitors bind to the ATP binding pocket, MSC1609119A-1 functions as allosteric inhibitor and binds close to the DFG motif and the activation loop. In terms of biological role, receptor tyrosine kinase which mediates actions of insulin-like growth factor 1 (IGF1). Binds IGF1 with high affinity and IGF2 and insulin (INS) with a lower affinity. The activated IGF1R is involved in cell growth and survival control. IGF1R is crucial for tumor transformation and survival of malignant cell. Ligand binding activates the receptor kinase, leading to receptor autophosphorylation, and tyrosines phosphorylation of multiple substrates, that function as signaling adapter proteins including, the insulin-receptor substrates (IRS1/2), Shc and 14-3-3 proteins. Phosphorylation of IRSs proteins lead to the activation of two main signaling pathways: the PI3K-AKT/PKB pathway and the Ras-MAPK pathway. The result of activating the MAPK pathway is increased cellular proliferation, whereas activating the PI3K pathway inhibits apoptosis and stimulates protein synthesis. Phosphorylated IRS1 can activate the 85 kDa regulatory subunit of PI3K (PIK3R1), leading to activation of several downstream substrates, including protein AKT/PKB. AKT phosphorylation, in turn, enhances protein synthesis through mTOR activation and triggers the antiapoptotic effects of IGFIR through phosphorylation and inactivation of BAD. In parallel to PI3K-driven signaling, recruitment of Grb2/SOS by phosphorylated IRS1 or Shc leads to recruitment of Ras and activation of the ras-MAPK pathway. In addition to these two main signaling pathways IGF1R signals also through the Janus kinase/signal transducer and activator of transcription pathway (JAK/STAT). Phosphorylation of JAK proteins can lead to phosphorylation/activation of signal transducers and activators of transcription (STAT) proteins. In particular activation of STAT3, may be essential for the transforming activity of IGF1R. The JAK/STAT pathway activates gene transcription and may be responsible for the transforming activity. JNK kinases can also be activated by the IGF1R. IGF1 exerts inhibiting activities on JNK activation via phosphorylation and inhibition of MAP3K5/ASK1, which is able to directly associate with the IGF1R. When present in a hybrid receptor with INSR, binds IGF1. The protein is Insulin-like growth factor 1 receptor (IGF1R) of Sus scrofa (Pig).